We begin with the raw amino-acid sequence, 254 residues long: Phosphoribosylaminoimidazole-succinocarboxamide synthase (254 aa).

This sequence belongs to the SAICAR synthetase family.

The catalysed reaction is 5-amino-1-(5-phospho-D-ribosyl)imidazole-4-carboxylate + L-aspartate + ATP = (2S)-2-[5-amino-1-(5-phospho-beta-D-ribosyl)imidazole-4-carboxamido]succinate + ADP + phosphate + 2 H(+). The protein operates within purine metabolism; IMP biosynthesis via de novo pathway; 5-amino-1-(5-phospho-D-ribosyl)imidazole-4-carboxamide from 5-amino-1-(5-phospho-D-ribosyl)imidazole-4-carboxylate: step 1/2. This Bartonella quintana (strain Toulouse) (Rochalimaea quintana) protein is Phosphoribosylaminoimidazole-succinocarboxamide synthase.